The sequence spans 146 residues: Aminoglycoside N(6')-acetyltransferase type 1 (146 aa).

The N-acetyltransferase domain maps to 1 to 146; that stretch reads MNIMPVSESL…RVVYFKKHIG (146 aa). 4 residues coordinate substrate: Trp-22, His-25, Tyr-66, and Glu-79. 81–83 is a binding site for acetyl-CoA; that stretch reads IYV. Asp-115 is a substrate binding site. Asn-120 is a binding site for acetyl-CoA. Glu-136 contributes to the substrate binding site.

Homodimer.

It catalyses the reaction kanamycin B + acetyl-CoA = N(6')-acetylkanamycin B + CoA + H(+). Catalyzes the transfer of an acetyl group from acetyl-CoA to the 6'-amino group of aminoglycoside molecules conferring resistance to antibiotics containing the purpurosamine ring including amikacin, kanamycin, tobramycin and netilmicin. This Acinetobacter genomosp. 13 protein is Aminoglycoside N(6')-acetyltransferase type 1.